The primary structure comprises 101 residues: Small ribosomal subunit protein uS14 (101 aa).

The protein belongs to the universal ribosomal protein uS14 family. As to quaternary structure, part of the 30S ribosomal subunit. Contacts proteins S3 and S10.

Its function is as follows. Binds 16S rRNA, required for the assembly of 30S particles and may also be responsible for determining the conformation of the 16S rRNA at the A site. The sequence is that of Small ribosomal subunit protein uS14 from Histophilus somni (strain 2336) (Haemophilus somnus).